The sequence spans 343 residues: Holliday junction branch migration complex subunit RuvB (343 aa).

The tract at residues 1–23 is disordered; it reads MSDDFEVVRPEEQAGDEKDRDLR. Residues 1–183 form a large ATPase domain (RuvB-L) region; that stretch reads MSDDFEVVRP…FGIVQRFEFY (183 aa). Residues L22, R23, G64, K67, T68, T69, 130–132, R173, Y183, and R220 contribute to the ATP site; that span reads EDY. Mg(2+) is bound at residue T68. Residues 184–254 are small ATPAse domain (RuvB-S); that stretch reads SHEELASIIS…TVAAGLKQLN (71 aa). The interval 257 to 343 is head domain (RuvB-H); the sequence is GLGLETYDRQ…LGDGQEGLFD (87 aa). Positions 312 and 317 each coordinate DNA.

Belongs to the RuvB family. As to quaternary structure, homohexamer. Forms an RuvA(8)-RuvB(12)-Holliday junction (HJ) complex. HJ DNA is sandwiched between 2 RuvA tetramers; dsDNA enters through RuvA and exits via RuvB. An RuvB hexamer assembles on each DNA strand where it exits the tetramer. Each RuvB hexamer is contacted by two RuvA subunits (via domain III) on 2 adjacent RuvB subunits; this complex drives branch migration. In the full resolvosome a probable DNA-RuvA(4)-RuvB(12)-RuvC(2) complex forms which resolves the HJ.

The protein resides in the cytoplasm. The enzyme catalyses ATP + H2O = ADP + phosphate + H(+). The RuvA-RuvB-RuvC complex processes Holliday junction (HJ) DNA during genetic recombination and DNA repair, while the RuvA-RuvB complex plays an important role in the rescue of blocked DNA replication forks via replication fork reversal (RFR). RuvA specifically binds to HJ cruciform DNA, conferring on it an open structure. The RuvB hexamer acts as an ATP-dependent pump, pulling dsDNA into and through the RuvAB complex. RuvB forms 2 homohexamers on either side of HJ DNA bound by 1 or 2 RuvA tetramers; 4 subunits per hexamer contact DNA at a time. Coordinated motions by a converter formed by DNA-disengaged RuvB subunits stimulates ATP hydrolysis and nucleotide exchange. Immobilization of the converter enables RuvB to convert the ATP-contained energy into a lever motion, pulling 2 nucleotides of DNA out of the RuvA tetramer per ATP hydrolyzed, thus driving DNA branch migration. The RuvB motors rotate together with the DNA substrate, which together with the progressing nucleotide cycle form the mechanistic basis for DNA recombination by continuous HJ branch migration. Branch migration allows RuvC to scan DNA until it finds its consensus sequence, where it cleaves and resolves cruciform DNA. The chain is Holliday junction branch migration complex subunit RuvB from Treponema denticola (strain ATCC 35405 / DSM 14222 / CIP 103919 / JCM 8153 / KCTC 15104).